A 248-amino-acid chain; its full sequence is Probable proteasome subunit alpha type-3 (248 aa).

It belongs to the peptidase T1A family. The 26S proteasome consists of a 20S proteasome core and two 19S regulatory subunits. The 20S proteasome core is composed of 28 subunits that are arranged in four stacked rings, resulting in a barrel-shaped structure. The two end rings are each formed by seven alpha subunits, and the two central rings are each formed by seven beta subunits. The catalytic chamber with the active sites is on the inside of the barrel.

The protein localises to the cytoplasm. It is found in the nucleus. The proteasome is a multicatalytic proteinase complex which is characterized by its ability to cleave peptides with Arg, Phe, Tyr, Leu, and Glu adjacent to the leaving group at neutral or slightly basic pH. The proteasome has an ATP-dependent proteolytic activity. The protein is Probable proteasome subunit alpha type-3 of Schizosaccharomyces pombe (strain 972 / ATCC 24843) (Fission yeast).